Reading from the N-terminus, the 190-residue chain is Putative CRISPR system CMR subunit Cmr7 2 (190 aa).

It belongs to the CRISPR system Cmr7 family. In terms of assembly, homodimer.

CRISPR (clustered regularly interspaced short palindromic repeat) is an adaptive immune system that provides protection against mobile genetic elements (viruses, transposable elements and conjugative plasmids). CRISPR clusters contain spacers, sequences complementary to antecedent mobile elements, and target invading nucleic acids. CRISPR clusters are transcribed and processed into CRISPR RNA (crRNA). The sequence is that of Putative CRISPR system CMR subunit Cmr7 2 (cmr7b) from Saccharolobus solfataricus (strain ATCC 35092 / DSM 1617 / JCM 11322 / P2) (Sulfolobus solfataricus).